The sequence spans 310 residues: Putative HTH-type transcriptional regulatory protein LS215_1371 (310 aa).

An HTH cro/C1-type domain is found at 125–180 (LKHKREEMGYSIGDVAKFLGVSRKAIYDYEKGDSDVSLEVAEKLIDLFGDDIIGDV). The H-T-H motif DNA-binding region spans 136 to 155 (IGDVAKFLGVSRKAIYDYEK).

The sequence is that of Putative HTH-type transcriptional regulatory protein LS215_1371 from Saccharolobus islandicus (strain L.S.2.15 / Lassen #1) (Sulfolobus islandicus).